The following is a 340-amino-acid chain: Serine/threonine-protein kinase PDIK1L (340 aa).

Positions 8–333 (YDLIREVGRG…LELRLVQIAF (326 aa)) constitute a Protein kinase domain. ATP-binding positions include 14 to 22 (VGRGSYGVV) and Lys37. The active-site Proton acceptor is Asp164.

It belongs to the protein kinase superfamily. Ser/Thr protein kinase family.

It localises to the nucleus. The catalysed reaction is L-seryl-[protein] + ATP = O-phospho-L-seryl-[protein] + ADP + H(+). It carries out the reaction L-threonyl-[protein] + ATP = O-phospho-L-threonyl-[protein] + ADP + H(+). The sequence is that of Serine/threonine-protein kinase PDIK1L (PDIK1L) from Pongo abelii (Sumatran orangutan).